We begin with the raw amino-acid sequence, 256 residues long: Alcohol dehydrogenase (256 aa).

An NAD(+)-binding site is contributed by 12–35; that stretch reads FVAGLGGIGLDTSKELVKRDLKNL. Residue Ser-140 participates in substrate binding. The active-site Proton acceptor is the Tyr-153.

Belongs to the short-chain dehydrogenases/reductases (SDR) family. Homodimer.

It carries out the reaction a primary alcohol + NAD(+) = an aldehyde + NADH + H(+). It catalyses the reaction a secondary alcohol + NAD(+) = a ketone + NADH + H(+). This is Alcohol dehydrogenase (Adh) from Drosophila yakuba (Fruit fly).